The chain runs to 394 residues: NAD(P)H-quinone oxidoreductase subunit H (394 aa).

It belongs to the complex I 49 kDa subunit family. In terms of assembly, NDH-1 can be composed of about 15 different subunits; different subcomplexes with different compositions have been identified which probably have different functions.

It localises to the cellular thylakoid membrane. It carries out the reaction a plastoquinone + NADH + (n+1) H(+)(in) = a plastoquinol + NAD(+) + n H(+)(out). The catalysed reaction is a plastoquinone + NADPH + (n+1) H(+)(in) = a plastoquinol + NADP(+) + n H(+)(out). NDH-1 shuttles electrons from an unknown electron donor, via FMN and iron-sulfur (Fe-S) centers, to quinones in the respiratory and/or the photosynthetic chain. The immediate electron acceptor for the enzyme in this species is believed to be plastoquinone. Couples the redox reaction to proton translocation, and thus conserves the redox energy in a proton gradient. Cyanobacterial NDH-1 also plays a role in inorganic carbon-concentration. The protein is NAD(P)H-quinone oxidoreductase subunit H of Synechococcus sp. (strain WH7803).